A 150-amino-acid polypeptide reads, in one-letter code: MAKVLIIEARFYDHIADGLLAGARAEFDKAGVAHDLLVVPGIFELPAALKLVLTAAEQGNDKARYDGFVTLGCAIRGESDHYHHVGTECMRGIADLSMAYDLALGNGVLTVHNEAQALARSDPARKNLGGQAARACLRMMAVKRELGLSS.

5-amino-6-(D-ribitylamino)uracil contacts are provided by residues Phe-11, 42 to 44 (IFE), and 73 to 75 (CAI). 78–79 (ES) is a binding site for (2S)-2-hydroxy-3-oxobutyl phosphate. The active-site Proton donor is the His-81. Position 106 (Asn-106) interacts with 5-amino-6-(D-ribitylamino)uracil. Arg-120 serves as a coordination point for (2S)-2-hydroxy-3-oxobutyl phosphate.

It belongs to the DMRL synthase family.

It catalyses the reaction (2S)-2-hydroxy-3-oxobutyl phosphate + 5-amino-6-(D-ribitylamino)uracil = 6,7-dimethyl-8-(1-D-ribityl)lumazine + phosphate + 2 H2O + H(+). It participates in cofactor biosynthesis; riboflavin biosynthesis; riboflavin from 2-hydroxy-3-oxobutyl phosphate and 5-amino-6-(D-ribitylamino)uracil: step 1/2. In terms of biological role, catalyzes the formation of 6,7-dimethyl-8-ribityllumazine by condensation of 5-amino-6-(D-ribitylamino)uracil with 3,4-dihydroxy-2-butanone 4-phosphate. This is the penultimate step in the biosynthesis of riboflavin. This is 6,7-dimethyl-8-ribityllumazine synthase from Paramagnetospirillum magneticum (strain ATCC 700264 / AMB-1) (Magnetospirillum magneticum).